Consider the following 410-residue polypeptide: Arginine deiminase (410 aa).

Cysteine 400 acts as the Amidino-cysteine intermediate in catalysis.

The protein belongs to the arginine deiminase family.

The protein resides in the cytoplasm. The enzyme catalyses L-arginine + H2O = L-citrulline + NH4(+). It participates in amino-acid degradation; L-arginine degradation via ADI pathway; carbamoyl phosphate from L-arginine: step 1/2. This chain is Arginine deiminase, found in Streptococcus uberis (strain ATCC BAA-854 / 0140J).